A 311-amino-acid polypeptide reads, in one-letter code: Aspartate carbamoyltransferase catalytic subunit (311 aa).

Carbamoyl phosphate contacts are provided by Arg-57 and Thr-58. Position 86 (Lys-86) interacts with L-aspartate. Positions 107, 135, and 138 each coordinate carbamoyl phosphate. Residues Arg-168 and Arg-230 each contribute to the L-aspartate site. Residues Leu-269 and Pro-270 each coordinate carbamoyl phosphate.

This sequence belongs to the aspartate/ornithine carbamoyltransferase superfamily. ATCase family. As to quaternary structure, heterooligomer of catalytic and regulatory chains.

The enzyme catalyses carbamoyl phosphate + L-aspartate = N-carbamoyl-L-aspartate + phosphate + H(+). It functions in the pathway pyrimidine metabolism; UMP biosynthesis via de novo pathway; (S)-dihydroorotate from bicarbonate: step 2/3. Functionally, catalyzes the condensation of carbamoyl phosphate and aspartate to form carbamoyl aspartate and inorganic phosphate, the committed step in the de novo pyrimidine nucleotide biosynthesis pathway. The protein is Aspartate carbamoyltransferase catalytic subunit of Staphylothermus marinus (strain ATCC 43588 / DSM 3639 / JCM 9404 / F1).